The chain runs to 252 residues: Ribosome assembly factor mrt4 (252 aa).

Belongs to the universal ribosomal protein uL10 family. As to quaternary structure, associates with the pre-60S ribosomal particle.

Its subcellular location is the nucleus. The protein localises to the nucleolus. It is found in the cytoplasm. Component of the ribosome assembly machinery. Nuclear paralog of the ribosomal protein P0, it binds pre-60S subunits at an early stage of assembly in the nucleolus, and is replaced by P0 in cytoplasmic pre-60S subunits and mature 80S ribosomes. The polypeptide is Ribosome assembly factor mrt4 (Neurospora crassa (strain ATCC 24698 / 74-OR23-1A / CBS 708.71 / DSM 1257 / FGSC 987)).